The following is a 61-amino-acid chain: Alpha-conotoxin-like PnMGMR-02 (61 aa).

The signal sequence occupies residues 1-21; the sequence is MGMRMMFTVFLLVVLATTVVS. The propeptide occupies 22–44; the sequence is FTSDRASDGGNAAASDLIALTIK. 2 disulfide bridges follow: Cys-46-Cys-52 and Cys-47-Cys-60. The tract at residues 48–50 is ser-Xaa-Pro motif, crucial for potent interaction with nAChR; sequence SRP. A Cysteine amide modification is found at Cys-60.

Belongs to the conotoxin A superfamily. In terms of tissue distribution, expressed by the venom duct.

It is found in the secreted. In terms of biological role, alpha-conotoxins act on postsynaptic membranes, they bind to the nicotinic acetylcholine receptors (nAChR) and thus inhibit them. This toxin blocks mammalian nAChRs (alpha-7 &gt; alpha-3/beta-2). The protein is Alpha-conotoxin-like PnMGMR-02 of Conus pennaceus (Feathered cone).